The chain runs to 457 residues: Proline-specific permease ProY (457 aa).

The Cytoplasmic segment spans residues Met1–Arg17. 2 consecutive transmembrane segments (helical) span residues Phe18–Lys38 and Met39–Met59. Topologically, residues Arg60–Gly84 are cytoplasmic. The chain crosses the membrane as a helical span at residues Pro85–Ala105. The Periplasmic segment spans residues Asp106–Tyr113. The helical transmembrane segment at Met114–Ile134 threads the bilayer. Over Cys135–Lys156 the chain is Cytoplasmic. A helical membrane pass occupies residues Val157 to Asn177. The Periplasmic portion of the chain corresponds to Gly178–Gly197. Residues Trp198 to Ile218 form a helical membrane-spanning segment. Residues Gly219–Arg242 lie on the Cytoplasmic side of the membrane. A helical transmembrane segment spans residues Ile243 to Val263. At Gly264 to Met277 the chain is on the periplasmic side. A helical transmembrane segment spans residues Gly278–Ile298. Residues Asn299–Pro331 are Cytoplasmic-facing. The helical transmembrane segment at Trp332–Met352 threads the bilayer. Residues Pro353 to Asn355 lie on the Periplasmic side of the membrane. A helical transmembrane segment spans residues Val356–Leu376. At Leu377–Pro399 the chain is on the cytoplasmic side. A helical membrane pass occupies residues Gly400–Gly420. The Periplasmic segment spans residues Tyr421 to Asp424. A helical transmembrane segment spans residues Thr425–Phe445. The Cytoplasmic segment spans residues Lys446–Gln457.

This sequence belongs to the amino acid-polyamine-organocation (APC) superfamily. Amino acid transporter (AAT) (TC 2.A.3.1) family.

The protein resides in the cell inner membrane. Its function is as follows. Permease that is involved in the transport across the cytoplasmic membrane of proline. The chain is Proline-specific permease ProY (proY) from Escherichia coli O157:H7.